We begin with the raw amino-acid sequence, 501 residues long: Glycosyltransferase family 92 protein F13G3.3 (501 aa).

The helical transmembrane segment at 10–30 threads the bilayer; that stretch reads LSVVLLFSFLFFVTAVLLQFI. In terms of domain architecture, GT92 spans 151–439; it reads KPVVMCISPL…ISDCYKQSYY (289 aa).

This sequence belongs to the glycosyltransferase 92 family.

It is found in the membrane. In Caenorhabditis elegans, this protein is Glycosyltransferase family 92 protein F13G3.3.